Consider the following 259-residue polypeptide: Type III pantothenate kinase (259 aa).

6–13 is an ATP binding site; that stretch reads DAGNTNIV. Substrate contacts are provided by residues Tyr100 and 107-110; that span reads GADR. Asp109 serves as the catalytic Proton acceptor. Residue Asp129 participates in K(+) binding. ATP is bound at residue Thr132. Position 184 (Thr184) interacts with substrate.

This sequence belongs to the type III pantothenate kinase family. In terms of assembly, homodimer. NH4(+) serves as cofactor. It depends on K(+) as a cofactor.

It localises to the cytoplasm. It catalyses the reaction (R)-pantothenate + ATP = (R)-4'-phosphopantothenate + ADP + H(+). Its pathway is cofactor biosynthesis; coenzyme A biosynthesis; CoA from (R)-pantothenate: step 1/5. In terms of biological role, catalyzes the phosphorylation of pantothenate (Pan), the first step in CoA biosynthesis. This Clostridium novyi (strain NT) protein is Type III pantothenate kinase.